Consider the following 374-residue polypeptide: 4-hydroxy-3-methylbut-2-en-1-yl diphosphate synthase (flavodoxin) (374 aa).

[4Fe-4S] cluster-binding residues include Cys268, Cys271, Cys303, and Glu310.

This sequence belongs to the IspG family. The cofactor is [4Fe-4S] cluster.

The catalysed reaction is (2E)-4-hydroxy-3-methylbut-2-enyl diphosphate + oxidized [flavodoxin] + H2O + 2 H(+) = 2-C-methyl-D-erythritol 2,4-cyclic diphosphate + reduced [flavodoxin]. Its pathway is isoprenoid biosynthesis; isopentenyl diphosphate biosynthesis via DXP pathway; isopentenyl diphosphate from 1-deoxy-D-xylulose 5-phosphate: step 5/6. Its function is as follows. Converts 2C-methyl-D-erythritol 2,4-cyclodiphosphate (ME-2,4cPP) into 1-hydroxy-2-methyl-2-(E)-butenyl 4-diphosphate. The chain is 4-hydroxy-3-methylbut-2-en-1-yl diphosphate synthase (flavodoxin) from Geobacillus thermodenitrificans (strain NG80-2).